A 172-amino-acid chain; its full sequence is MLDAFAKVVAQADARGEFLSNTQLDALSSMVAEGNKRLDVVNKINSNASAIVTNSARALFAEQPQLIQPGGNAYTNRRMAACLRDMEIVLRYVSYAMIAGDSSVLDDRCLNGLRETYQALGTPGSSVSVAVQKMKEASVALANDLTGTPQGDCSALVAELGSYFDRAAVSVV.

Asn72 carries the post-translational modification N4-methylasparagine. Positions 82 and 153 each coordinate (2R,3E)-phycocyanobilin.

This sequence belongs to the phycobiliprotein family. In terms of assembly, heterodimer of an alpha and a beta subunit, which further assembles into trimers and the trimers into hexamers. The basic functional unit of phycobiliproteins is a ring-shaped hexamer formed from two back-to-back trimers contacting via the alpha chain subunits. The trimers are composed of alpha/beta subunit heterodimers arranged around a three-fold axis of symmetry. The phycoerythrins also contain a gamma subunit which is located in the center of the hexamer. Contains two covalently linked bilin chromophores.

The protein resides in the plastid. The protein localises to the chloroplast thylakoid membrane. Its function is as follows. Light-harvesting photosynthetic bile pigment-protein from the phycobiliprotein complex (phycobilisome, PBS). Phycocyanin is the major phycobiliprotein in the PBS rod. In Porphyra purpurea (Red seaweed), this protein is C-phycocyanin beta chain (cpcB).